We begin with the raw amino-acid sequence, 113 residues long: Small ribosomal subunit protein bS6 (113 aa).

The protein belongs to the bacterial ribosomal protein bS6 family.

Functionally, binds together with bS18 to 16S ribosomal RNA. The sequence is that of Small ribosomal subunit protein bS6 from Buchnera aphidicola subsp. Schizaphis graminum (strain Sg).